Reading from the N-terminus, the 445-residue chain is Clusterin (445 aa).

The first 22 residues, 1–22 (MMKTLLLLVGLLLTWDNGRVLG), serve as a signal peptide directing secretion. The short motif at 78–81 (KKKK) is the Nuclear localization signal element. Residues N86 and N103 are each glycosylated (N-linked (GlcNAc...) asparagine). 5 cysteine pairs are disulfide-bonded: C102–C309, C113–C301, C116–C298, C121–C291, and C129–C281. The residue at position 133 (S133) is a Phosphoserine. Residues N145, N277, N287, N350, and N370 are each glycosylated (N-linked (GlcNAc...) asparagine). Phosphoserine is present on S392. A Nuclear localization signal motif is present at residues 439–443 (RQKHR).

The protein belongs to the clusterin family. In terms of assembly, antiparallel disulfide-linked heterodimer of an alpha chain and a beta chain. Self-associates and forms higher oligomers. Interacts with a broad range of misfolded proteins, including APP, APOC2 and LYZ. Slightly acidic pH promotes interaction with misfolded proteins. Forms high-molecular weight oligomers upon interaction with misfolded proteins. Interacts with APOA1, LRP2, CLUAP1 and PON1. Interacts with the complement membrane attack complex. Interacts (via alpha chain) with XRCC6. Interacts with SYVN1, COMMD1, BTRC, CUL1 and with ubiquitin and SCF (SKP1-CUL1-F-box protein) E3 ubiquitin-protein ligase complexes. Interacts (via alpha chain) with BAX in stressed cells, where BAX undergoes a conformation change leading to association with the mitochondrial membrane. Does not interact with BAX in unstressed cells. Found in a complex with LTF, CLU, EPPIN and SEMG1. Interacts (immaturely glycosylated pre-secreted form) with HSPA5; this interaction promotes CLU stability and facilitates stress-induced CLU retrotranslocation from the secretory pathway to the mitochondria, thereby reducing stress-induced apoptosis by stabilizing mitochondrial membrane integrity. Interacts with BCL2L1; this interaction releases and activates BAX and promotes cell death. Interacts with TGFBR2 and ACVR1. Interacts (secreted form) with STMN3; this interaction may act as an important modulator during neuronal differentiation. Interacts with VLDLR and LRP8. Proteolytically cleaved on its way through the secretory system, probably within the Golgi lumen. Proteolytic cleavage is not necessary for its chaperone activity. All non-secreted forms are not proteolytically cleaved. Chaperone activity of uncleaved forms is dependent on a non-reducing environment. This proteolytic maturation is disulfide bond formation dependent. In terms of processing, polyubiquitinated, leading to proteasomal degradation. Under cellular stress, the intracellular level of cleaved form is reduced due to proteasomal degradation. Post-translationally, heavily N-glycosylated. About 30% of the protein mass is comprised of complex N-linked carbohydrate. Endoplasmic reticulum (ER) stress induces changes in glycosylation status and increases level of hypoglycosylated forms. Core carbohydrates are essential for chaperone activity. Non-secreted forms are hypoglycosylated or unglycosylated.

It localises to the secreted. The protein localises to the nucleus. The protein resides in the cytoplasm. It is found in the mitochondrion membrane. Its subcellular location is the cytosol. It localises to the microsome. The protein localises to the endoplasmic reticulum. The protein resides in the mitochondrion. It is found in the perinuclear region. Its subcellular location is the cytoplasmic vesicle. It localises to the secretory vesicle. The protein localises to the chromaffin granule. In terms of biological role, functions as extracellular chaperone that prevents aggregation of non native proteins. Prevents stress-induced aggregation of blood plasma proteins. Inhibits formation of amyloid fibrils by APP, APOC2, B2M, CALCA, CSN3, SNCA and aggregation-prone LYZ variants (in vitro). Does not require ATP. Maintains partially unfolded proteins in a state appropriate for subsequent refolding by other chaperones, such as HSPA8/HSC70. Does not refold proteins by itself. Binding to cell surface receptors triggers internalization of the chaperone-client complex and subsequent lysosomal or proteasomal degradation. When secreted, protects cells against apoptosis and against cytolysis by complement: inhibits assembly of the complement membrane attack complex (MAC) by preventing polymerization of C9 pore component of the MAC complex. Intracellular forms interact with ubiquitin and SCF (SKP1-CUL1-F-box protein) E3 ubiquitin-protein ligase complexes and promote the ubiquitination and subsequent proteasomal degradation of target proteins. Promotes proteasomal degradation of COMMD1 and IKBKB. Modulates NF-kappa-B transcriptional activity. Following stress, promotes apoptosis. Inhibits apoptosis when associated with the mitochondrial membrane by interference with BAX-dependent release of cytochrome c into the cytoplasm. Plays a role in the regulation of cell proliferation. An intracellular form suppresses stress-induced apoptosis by stabilizing mitochondrial membrane integrity through interaction with HSPA5. Secreted form does not affect caspase or BAX-mediated intrinsic apoptosis and TNF-induced NF-kappa-B-activity. Secreted form act as an important modulator during neuronal differentiation through interaction with STMN3. Plays a role in the clearance of immune complexes that arise during cell injury. In Canis lupus familiaris (Dog), this protein is Clusterin (CLU).